The sequence spans 280 residues: Ribosomal RNA small subunit methyltransferase A (280 aa).

6 residues coordinate S-adenosyl-L-methionine: histidine 13, leucine 15, glycine 40, glutamate 61, aspartate 85, and asparagine 105.

Belongs to the class I-like SAM-binding methyltransferase superfamily. rRNA adenine N(6)-methyltransferase family. RsmA subfamily.

It localises to the cytoplasm. The enzyme catalyses adenosine(1518)/adenosine(1519) in 16S rRNA + 4 S-adenosyl-L-methionine = N(6)-dimethyladenosine(1518)/N(6)-dimethyladenosine(1519) in 16S rRNA + 4 S-adenosyl-L-homocysteine + 4 H(+). Specifically dimethylates two adjacent adenosines (A1518 and A1519) in the loop of a conserved hairpin near the 3'-end of 16S rRNA in the 30S particle. May play a critical role in biogenesis of 30S subunits. The chain is Ribosomal RNA small subunit methyltransferase A from Phocaeicola vulgatus (strain ATCC 8482 / DSM 1447 / JCM 5826 / CCUG 4940 / NBRC 14291 / NCTC 11154) (Bacteroides vulgatus).